We begin with the raw amino-acid sequence, 396 residues long: Mevalonate kinase (396 aa).

ATP contacts are provided by residues lysine 13, asparagine 55, serine 135, and 140–146 (GAGLGSS). Serine 146 (proton donor) is an active-site residue. Residues serine 146 and glutamate 193 each contribute to the Mg(2+) site. Catalysis depends on aspartate 204, which acts as the Proton acceptor.

The protein belongs to the GHMP kinase family. Mevalonate kinase subfamily. As to quaternary structure, homodimer. Mg(2+) serves as cofactor.

It localises to the cytoplasm. It is found in the peroxisome. The enzyme catalyses (R)-mevalonate + ATP = (R)-5-phosphomevalonate + ADP + H(+). The protein operates within isoprenoid biosynthesis; isopentenyl diphosphate biosynthesis via mevalonate pathway; isopentenyl diphosphate from (R)-mevalonate: step 1/3. With respect to regulation, farnesyl pyrophosphate and geranyl pyrophosphate inhibit mevalonate kinase activity by binding competitively at the ATP-binding sites. In terms of biological role, catalyzes the phosphorylation of mevalonate to mevalonate 5-phosphate, a key step in isoprenoid and cholesterol biosynthesis. The sequence is that of Mevalonate kinase from Bos taurus (Bovine).